The sequence spans 184 residues: Cathelicidin-related peptide Pt_CRAMP2 (184 aa).

The signal sequence occupies residues 1-22; the sequence is MDGFFWKTWLVVAALAIGGTSS. A propeptide spanning residues 23-150 is cleaved from the precursor; the sequence is LPHKPLTYEE…EDEKDQPRRV (128 aa). 2 cysteine pairs are disulfide-bonded: Cys81–Cys92 and Cys103–Cys120. A compositionally biased stretch (acidic residues) spans 125-144; sequence EDEEQNQEEEEEEEKEEDEK. Positions 125 to 147 are disordered; the sequence is EDEEQNQEEEEEEEKEEDEKDQP.

Belongs to the cathelicidin family. Expressed by the venom gland.

The protein resides in the secreted. Its subcellular location is the target cell membrane. In terms of biological role, potent antimicrobial peptide against most of Gram-negative bacteria, some Gram-positive bacteria (Bacillus) and some fungi (C.albicans, P.pastoris, A.terreus, A.nidulans, and C.globosum). Adopts an amphipathic alpha helical conformation, that may allow to partition into the target membrane. No hemolytic and cytotoxic activities have been observed on mammalian cells. In Pseudonaja textilis (Eastern brown snake), this protein is Cathelicidin-related peptide Pt_CRAMP2.